A 394-amino-acid chain; its full sequence is Cell division protein FtsZ (394 aa).

GTP-binding positions include 21 to 25 (GGGGN), 108 to 110 (GTG), E139, R143, and D187.

The protein belongs to the FtsZ family. Homodimer. Polymerizes to form a dynamic ring structure in a strictly GTP-dependent manner. Interacts directly with several other division proteins. Interacts with the SulA inhibitor.

It is found in the cytoplasm. In terms of biological role, essential cell division protein that forms a contractile ring structure (Z ring) at the future cell division site. The regulation of the ring assembly controls the timing and the location of cell division. One of the functions of the FtsZ ring is to recruit other cell division proteins to the septum to produce a new cell wall between the dividing cells. Binds GTP and shows GTPase activity. The polypeptide is Cell division protein FtsZ (Pseudomonas aeruginosa (strain ATCC 15692 / DSM 22644 / CIP 104116 / JCM 14847 / LMG 12228 / 1C / PRS 101 / PAO1)).